The sequence spans 150 residues: Photosystem I reaction center subunit XI (150 aa).

The Stromal portion of the chain corresponds to 1–72; that stretch reads MSDFIQSYNN…DKLGPLRNTD (72 aa). Residues 73–93 form a helical membrane-spanning segment; the sequence is VALLSGFLSAVGLIIILTVCL. Topologically, residues 94-118 are lumenal; that stretch reads SMYGNVSFDKDDAKDLLQTTEGWGQ. The helical transmembrane segment at 119–139 threads the bilayer; it reads FTAGFLVGAVGGSGFAYLLLA. The Stromal portion of the chain corresponds to 140-150; that stretch reads NIPVLQNLGLS.

It belongs to the PsaL family.

The protein localises to the plastid. The protein resides in the chloroplast thylakoid membrane. This chain is Photosystem I reaction center subunit XI, found in Gracilaria tenuistipitata var. liui (Red alga).